Consider the following 1594-residue polypeptide: MAAAAVVVPAEWIKNWEKSGRGEFLHLCRILSENKSHDSSTYRDFQQALYELSYHVIKGNLKHEQASSVLNDISEFREDMPSILADVFCILDIETNCLEEKSKRDYFTQLVLACLYLVSDTVLKERLDPETLESLGLIKQSQQFNQKSVKIKTKLFYKQQKFNLLREENEGYAKLIAELGQDLSGNITSDLILENIKSLIGCFNLDPNRVLDVILEVFECRPEHDDFFISLLESYMSMCEPQTLCHILGFKFKFYQEPSGETPSSLYRVAAVLLQFNLIDLDDLYVHLLPADNCIMDEYKREIVEAKQIVRKLTMVVLSSEKLDERDKEKDKDDEKVEKPPDNQKLGLLEALLKVGDWQHAQNIMDQMPPYYAASHKLIALAICKLIHITVEPLYRRVGVPKGAKGSPVSALQNKRAPKQVESFEDLRRDVFNMFCYLGPHLSHDPILFAKVVRIGKSFMKEFQSDGSKQEDKEKTEVILSCLLSITDQVLLPSLSLMDCNACMSEELWGMFKTFPYQHRYRLYGQWKNETYNGHPLLVKVKAQTIDRAKYIMKRLTKENVKPSGRQIGKLSHSNPTILFDYILSQIQKYDNLITPVVDSLKYLTSLNYDVLAYCIIEALANPEKERMKHDDTTISSWLQSLASFCGAVFRKYPIDLAGLLQYVANQLKAGKSFDLLILKEVVQKMAGIEITEEMTMEQLEAMTGGEQLKAEGGYFGQIRNTKKSSQRLKDALLDHDLALPLCLLMAQQRNGVIFQEGGEKHLKLVGKLYDQCHDTLVQFGGFLASNLSTEDYIKRVPSIDVLCNEFHTPHDAAFFLSRPMYAHHISSKYDELKKSEKGSKQQHKVHKYITSCEMVMAPVHEAVVSLHVSKVWDDISPQFYATFWSLTMYDLAVPHTSYEREVNKLKVQMKAIDDNQEMPPNKKKKEKERCTALQDKLLEEEKKQMEHVQRVLQRLKLEKDNWLLAKSTKNETITKFLQLCIFPRCIFSAIDAVYCARFVELVHQQKTPNFSTLLCYDRVFSDIIYTVASCTENEASRYGRFLCCMLETVTRWHSDRATYEKECGNYPGFLTILRATGFDGGNKADQLDYENFRHVVHKWHYKLTKASVHCLETGEYTHIRNILIVLTKILPWYPKVLNLGQALERRVNKICQEEKEKRPDLYALAMGYSGQLKSRKSHMIPENEFHHKDPPPRNAVASVQNGPGGGTSSSSIGNASKSDESGAEETDKSRERSQCGTKAVNKASSTTPKGNSSNGNSGSNSNKAVKENDKEKVKEKEKEKKEKTPATTPEARALGKDSKEKPKEERPNKEDKARETKERTPKSDKEKEKFKKEEKAKDEKFKTTVPIVESKSTQEREREKEPSRERDVAKEMKSKENVKGGEKTPVSGSLKSPVPRSDISEPDREQKRRKIDSHPSPSHSSTVKDSLIDLKDSSAKLYINHNPPPLSKSKEREMDKKDLDKSRERSREREKKDEKDRKERKRDHSNNDREVPPDITKRRKEENGTMGVSKHKSESPCESQYPNEKDKEKNKSKSSGKEKSSSDSFKSEKMDKISSGGKKESRHDKEKIEKKEKRDSSGGKEEKKHHKSSDKHR.

The tract at residues 1-163 is anchor domain; interaction with THOC5 and THOC7; the sequence is MAAAAVVVPA…KLFYKQQKFN (163 aa). Residues 164-534 form a bow domain; interaction with THOC1 dock domain and THOC3 region; sequence LLREENEGYA…GQWKNETYNG (371 aa). The MIF4G domain; interaction with THOC3 and DDX39B stretch occupies residues 535–686; the sequence is HPLLVKVKAQ…LILKEVVQKM (152 aa). The stern domain stretch occupies residues 687-1174; sequence AGIEITEEMT…LAMGYSGQLK (488 aa). A coiled-coil region spans residues 896 to 965; sequence HTSYEREVNK…LKLEKDNWLL (70 aa). Residues 923-928 carry the Nuclear localization signal motif; the sequence is KKKKEK. Residues 1175–1594 form a charged domain region; sequence SRKSHMIPEN…KHHKSSDKHR (420 aa). Basic and acidic residues-rich tracts occupy residues 1183–1192 and 1218–1234; these read ENEFHHKDPP and KSDE…RERS. Residues 1183–1594 form a disordered region; that stretch reads ENEFHHKDPP…KHHKSSDKHR (412 aa). At Ser-1222 the chain carries Phosphoserine. The span at 1251 to 1264 shows a compositional bias: low complexity; it reads GNSSNGNSGSNSNK. Basic and acidic residues-rich tracts occupy residues 1265–1285, 1294–1343, and 1353–1383; these read AVKE…KEKT, ALGK…EKFK, and STQE…KGGE. The residue at position 1385 (Thr-1385) is a Phosphothreonine. A phosphoserine mark is found at Ser-1390, Ser-1393, Ser-1417, Ser-1450, Ser-1486, and Ser-1516. A compositionally biased stretch (polar residues) spans 1416–1425; that stretch reads PSPSHSSTVK. Positions 1449–1504 are enriched in basic and acidic residues; it reads KSKEREMDKKDLDKSRERSREREKKDEKDRKERKRDHSNNDREVPPDITKRRKEEN. Positions 1464–1491 form a coiled coil; that stretch reads RERSREREKKDEKDRKERKRDHSNNDRE. Positions 1524-1583 are enriched in basic and acidic residues; that stretch reads NEKDKEKNKSKSSGKEKSSSDSFKSEKMDKISSGGKKESRHDKEKIEKKEKRDSSGGKEE. The span at 1584–1594 shows a compositional bias: basic residues; that stretch reads KKHHKSSDKHR.

The protein belongs to the THOC2 family. In terms of assembly, component of the THO subcomplex, which is composed of THOC1, THOC2, THOC3, THOC5, THOC6 and THOC7. The THO subcomplex interacts with DDX39B to form the THO-DDX39B complex which multimerizes into a 28-subunit tetrameric assembly. Component of the transcription/export (TREX) complex at least composed of ALYREF/THOC4, DDX39B, SARNP/CIP29, CHTOP and the THO subcomplex; in the complex interacts with THOC1, THOC3, THOC5, THOC7 and DDX39B. TREX seems to have a dynamic structure involving ATP-dependent remodeling. Interacts with POLDIP3. Interacts with ZC3H11A. In terms of tissue distribution, expressed in the hippocampus and the cortical neurons.

The protein localises to the nucleus. The protein resides in the nucleus speckle. It localises to the cytoplasm. Component of the THO subcomplex of the TREX complex which is thought to couple mRNA transcription, processing and nuclear export, and which specifically associates with spliced mRNA and not with unspliced pre-mRNA. Required for efficient export of polyadenylated RNA and spliced mRNA. The THOC1-THOC2-THOC3 core complex alone is sufficient to bind export factor NXF1-NXT1 and promote ATPase activity of DDX39B; in the complex THOC2 is the only component that directly interacts with DDX39B. TREX is recruited to spliced mRNAs by a transcription-independent mechanism, binds to mRNA upstream of the exon-junction complex (EJC) and is recruited in a splicing- and cap-dependent manner to a region near the 5' end of the mRNA where it functions in mRNA export to the cytoplasm via the TAP/NXF1 pathway. Required for NXF1 localization to the nuclear rim. THOC2 (and probably the THO complex) is involved in releasing mRNA from nuclear speckle domains. Plays a role for proper neuronal development. This chain is THO complex subunit 2 (Thoc2), found in Mus musculus (Mouse).